Reading from the N-terminus, the 293-residue chain is 4-hydroxy-tetrahydrodipicolinate synthase (293 aa).

T45 contributes to the pyruvate binding site. Y133 acts as the Proton donor/acceptor in catalysis. Catalysis depends on K162, which acts as the Schiff-base intermediate with substrate. Position 204 (I204) interacts with pyruvate.

Belongs to the DapA family. Homotetramer; dimer of dimers.

The protein localises to the cytoplasm. It catalyses the reaction L-aspartate 4-semialdehyde + pyruvate = (2S,4S)-4-hydroxy-2,3,4,5-tetrahydrodipicolinate + H2O + H(+). The protein operates within amino-acid biosynthesis; L-lysine biosynthesis via DAP pathway; (S)-tetrahydrodipicolinate from L-aspartate: step 3/4. In terms of biological role, catalyzes the condensation of (S)-aspartate-beta-semialdehyde [(S)-ASA] and pyruvate to 4-hydroxy-tetrahydrodipicolinate (HTPA). This is 4-hydroxy-tetrahydrodipicolinate synthase from Mesorhizobium japonicum (strain LMG 29417 / CECT 9101 / MAFF 303099) (Mesorhizobium loti (strain MAFF 303099)).